A 334-amino-acid chain; its full sequence is Glyceraldehyde-3-phosphate dehydrogenase (334 aa).

Residues 11-12 (RI), Asp-33, and Ser-119 each bind NAD(+). D-glyceraldehyde 3-phosphate contacts are provided by residues 149–151 (SCT) and Thr-180. Cys-150 serves as the catalytic Nucleophile. Asn-181 lines the NAD(+) pocket. D-glyceraldehyde 3-phosphate contacts are provided by residues Arg-197, 210–211 (TG), and Arg-233. Asn-314 serves as a coordination point for NAD(+).

This sequence belongs to the glyceraldehyde-3-phosphate dehydrogenase family. In terms of assembly, homotetramer.

The protein resides in the cytoplasm. It catalyses the reaction D-glyceraldehyde 3-phosphate + phosphate + NAD(+) = (2R)-3-phospho-glyceroyl phosphate + NADH + H(+). It functions in the pathway carbohydrate degradation; glycolysis; pyruvate from D-glyceraldehyde 3-phosphate: step 1/5. In terms of biological role, catalyzes the oxidative phosphorylation of glyceraldehyde 3-phosphate (G3P) to 1,3-bisphosphoglycerate (BPG) using the cofactor NAD. The first reaction step involves the formation of a hemiacetal intermediate between G3P and a cysteine residue, and this hemiacetal intermediate is then oxidized to a thioester, with concomitant reduction of NAD to NADH. The reduced NADH is then exchanged with the second NAD, and the thioester is attacked by a nucleophilic inorganic phosphate to produce BPG. The polypeptide is Glyceraldehyde-3-phosphate dehydrogenase (gap) (Clostridium acetobutylicum (strain ATCC 824 / DSM 792 / JCM 1419 / IAM 19013 / LMG 5710 / NBRC 13948 / NRRL B-527 / VKM B-1787 / 2291 / W)).